The chain runs to 868 residues: MSTWPIDAISKKPSVSLDYGIIGACQLLNPSGYHRAEKVENNEWTFARYDSYTGVELVDLDKRWDILSLNPNYKLPKLTELPAEATNSTRKATSSSFGLSVCRYVPRNLFSTLAKESQLASSAESIYNPHILNTFCLGKTAPSDKNRYTTTECLACSKISNETAENLLFLCLSSPWIFRASPTLQNTATFEEFPFYLNVSAFEFAEDPIWKFSQPVRQLVFSNGEPSLLFALSSCELVIFQVTYDLMFLDEPNTPGCLSAIPLRFLYADDVYNSDSFANVSVHPTDNSFFLTTSSSGRWTIWQFLDDGYRECFGSSFKESLQQALCSAPTSSIAYHEEEINPDNTIYRAKWEEYFGGVILHNAFFILHVSLGEVPDFHLLFHCSSDVRILQVVNESMPIKSEFFILTTESVLWMDIQHPQKPLLEWKHNRKLDPTLKITVTATFSQNIYVSVYSQMNGVVQQIHFSKDRALPVSGSHPFLLLNEVQVPIRSLIIQPCYFFESSEFDRQGPFDSPFWSAIIDKADGSLSLHILCEKSSLKIYNLEELTGSSQVAMKFKTITPSVNTSEDDSANDQEIISTPNSDFQQLSLSRLYHVLCSNRNKKNTITLDEFASKVPDFVEAFDSINHDVIITLSELYDGFPLKGTFTNVAEIISHLEGTELSFYFPYMFGINYNNASFFYTSVDSIASLIHRRWESNTDKSVEIPCFQSSQRRSIKNVIHYLFLSSIGVSREKIFDPSLSRKEIDSTDLLTFIKPFYDTEGLELNEDVRNILENWEIGKISSTYVIGDSAVETEDPSSSQFSDFYISQQQSSVLPSSQIATVFSQEDVPNFSSLYSESSSQTIPIMSQVVSGKYGSRPSKKKKKRSGF.

It localises to the cytoplasm. Its subcellular location is the nucleus. This is an uncharacterized protein from Schizosaccharomyces pombe (strain 972 / ATCC 24843) (Fission yeast).